The sequence spans 146 residues: Hemoglobin subunit beta-1 (146 aa).

The 145-residue stretch at H2–H146 folds into the Globin domain. Heme b-binding residues include H63 and H92.

The protein belongs to the globin family. As to quaternary structure, heterotetramer of two alpha chains and two beta chains. As to expression, red blood cells.

Its function is as follows. Involved in oxygen transport from the lung to the various peripheral tissues. The protein is Hemoglobin subunit beta-1 of Drymarchon melanurus erebennus (Texas indigo snake).